The primary structure comprises 520 residues: FAD-linked oxidoreductase OXR2 (520 aa).

A signal peptide spans 1-23 (MKSFSLLASAGLATLASLPLTMA). N-linked (GlcNAc...) asparagine glycans are attached at residues asparagine 77, asparagine 220, asparagine 378, and asparagine 390. The FAD-binding PCMH-type domain occupies 79–251 (SRPTIRLVVV…TSFQSKIYPR (173 aa)).

This sequence belongs to the oxygen-dependent FAD-linked oxidoreductase family. It depends on FAD as a cofactor.

It functions in the pathway polyketide biosynthesis. Its function is as follows. FAD-linked oxidoreductase; part of the gene cluster that mediates the biosynthesis of pyriculol and pyriculariol, two heptaketides that induce lesion formation upon application on rice leaves but are dispensable for pathogenicity. The highly reducing polyketide synthase synthesizes the heptaketide backbone of pyriculol and pyriculariol. Pyriculol and pyriculariol contain several hydroxyl moieties and double bonds, so it can be assumed that several reduction steps occur during biosynthesis. These reactions could be executed by PKS19 itself or partly by the tailoring enzymes OXR1, OXR2, RED1, RED2 or RED3, identified within the cluster. The FAD-linked oxidoreductase OXR1 is the only tailoring enzyme for which the function has been determined yet, and is involved in the oxidation of dihydropyriculol and dihydropyriculariol into pyriculol and pyriculariol, respectively. This Pyricularia oryzae (strain 70-15 / ATCC MYA-4617 / FGSC 8958) (Rice blast fungus) protein is FAD-linked oxidoreductase OXR2.